Consider the following 381-residue polypeptide: Bifunctional polyhydroxybutyrate synthase / ABC transporter periplasmic binding protein (381 aa).

The N-terminal stretch at 1-22 is a signal peptide; it reads MSKTFARSSLCALSMTIMTAHA.

The protein belongs to the bacterial solute-binding protein PotD/PotF family.

It is found in the periplasm. The catalysed reaction is (3R)-3-hydroxybutanoyl-CoA + [(3R)-hydroxybutanoate](n) = [(3R)-hydroxybutanoate](n+1) + CoA. In terms of biological role, catalyzes the formation of short polymers of R-3-hydroxybutyrate (cPHB). Involved in natural transformation. Probably part of the ABC transporter complex YdcSTUV. During natural transformation, may bind dsDNA and convey it to the inner membrane channel formed by YdcV. The chain is Bifunctional polyhydroxybutyrate synthase / ABC transporter periplasmic binding protein (ydcS) from Escherichia coli (strain K12).